The primary structure comprises 473 residues: Glutamate--tRNA ligase (473 aa).

Residues 11–21 (PSPTGFLHIGG) carry the 'HIGH' region motif. The short motif at 240–244 (KLSKR) is the 'KMSKS' region element. Residue Lys243 coordinates ATP.

It belongs to the class-I aminoacyl-tRNA synthetase family. Glutamate--tRNA ligase type 1 subfamily. In terms of assembly, monomer.

The protein resides in the cytoplasm. It catalyses the reaction tRNA(Glu) + L-glutamate + ATP = L-glutamyl-tRNA(Glu) + AMP + diphosphate. Catalyzes the attachment of glutamate to tRNA(Glu) in a two-step reaction: glutamate is first activated by ATP to form Glu-AMP and then transferred to the acceptor end of tRNA(Glu). The chain is Glutamate--tRNA ligase from Rhodopseudomonas palustris (strain TIE-1).